A 162-amino-acid chain; its full sequence is Cyclic pyranopterin monophosphate synthase (162 aa).

Substrate is bound by residues 75–77 (LCH) and 113–114 (ME). The active site involves Asp-128.

It belongs to the MoaC family. Homohexamer; trimer of dimers.

The enzyme catalyses (8S)-3',8-cyclo-7,8-dihydroguanosine 5'-triphosphate = cyclic pyranopterin phosphate + diphosphate. Its pathway is cofactor biosynthesis; molybdopterin biosynthesis. Its function is as follows. Catalyzes the conversion of (8S)-3',8-cyclo-7,8-dihydroguanosine 5'-triphosphate to cyclic pyranopterin monophosphate (cPMP). The chain is Cyclic pyranopterin monophosphate synthase from Burkholderia lata (strain ATCC 17760 / DSM 23089 / LMG 22485 / NCIMB 9086 / R18194 / 383).